We begin with the raw amino-acid sequence, 222 residues long: Probable nicotinate-nucleotide adenylyltransferase (222 aa).

Belongs to the NadD family.

The catalysed reaction is nicotinate beta-D-ribonucleotide + ATP + H(+) = deamido-NAD(+) + diphosphate. The protein operates within cofactor biosynthesis; NAD(+) biosynthesis; deamido-NAD(+) from nicotinate D-ribonucleotide: step 1/1. In terms of biological role, catalyzes the reversible adenylation of nicotinate mononucleotide (NaMN) to nicotinic acid adenine dinucleotide (NaAD). This chain is Probable nicotinate-nucleotide adenylyltransferase, found in Stenotrophomonas maltophilia (strain K279a).